A 155-amino-acid polypeptide reads, in one-letter code: Transcriptional regulator MraZ (155 aa).

SpoVT-AbrB domains follow at residues 7-63 (REQH…EPSV) and 92-135 (LDQT…EPLR).

This sequence belongs to the MraZ family. In terms of assembly, forms oligomers.

It localises to the cytoplasm. Its subcellular location is the nucleoid. The protein is Transcriptional regulator MraZ of Chlorobaculum tepidum (strain ATCC 49652 / DSM 12025 / NBRC 103806 / TLS) (Chlorobium tepidum).